Reading from the N-terminus, the 170-residue chain is Large ribosomal subunit protein uL15 (170 aa).

The span at 1–12 shows a compositional bias: basic and acidic residues; sequence MKLHDLRPAEGA. The segment at 1–52 is disordered; that stretch reads MKLHDLRPAEGAHRKRKRIGRGHGSGKGKTGGKGMMGQKARSGPGPYRTFEG. The segment covering 13-26 has biased composition (basic residues); sequence HRKRKRIGRGHGSG.

It belongs to the universal ribosomal protein uL15 family. In terms of assembly, part of the 50S ribosomal subunit.

Its function is as follows. Binds to the 23S rRNA. In Chloroflexus aurantiacus (strain ATCC 29366 / DSM 635 / J-10-fl), this protein is Large ribosomal subunit protein uL15.